The sequence spans 164 residues: Protein phosphatase 1 regulatory subunit 14C (164 aa).

The segment covering M1 to A19 has biased composition (gly residues). A disordered region spans residues M1–T72. At S2 the chain carries N-acetylserine. At S25 the chain carries Phosphoserine. R27 bears the Omega-N-methylarginine mark. At S33 the chain carries Phosphoserine. Residues V50–Q62 show a composition bias toward low complexity. Phosphothreonine; by ILK1 is present on T72.

The protein belongs to the PP1 inhibitor family. Post-translationally, has over 600-fold higher inhibitory activity when phosphorylated, creating a molecular switch for regulating the phosphorylation status of PPP1CA substrates and smooth muscle contraction. The main inhibitory site appears to be Thr-72.

The protein localises to the endomembrane system. Its function is as follows. Inhibitor of the PP1 regulatory subunit PPP1CA. The polypeptide is Protein phosphatase 1 regulatory subunit 14C (Ppp1r14c) (Rattus norvegicus (Rat)).